The primary structure comprises 260 residues: Triosephosphate isomerase (260 aa).

Position 10–12 (10–12) interacts with substrate; sequence NWK. The active-site Electrophile is the His-100. Glu-172 acts as the Proton acceptor in catalysis. Substrate is bound by residues Gly-178, Ser-218, and 239-240; that span reads GG.

This sequence belongs to the triosephosphate isomerase family. As to quaternary structure, homodimer.

The protein localises to the cytoplasm. It carries out the reaction D-glyceraldehyde 3-phosphate = dihydroxyacetone phosphate. The protein operates within carbohydrate biosynthesis; gluconeogenesis. It participates in carbohydrate degradation; glycolysis; D-glyceraldehyde 3-phosphate from glycerone phosphate: step 1/1. Involved in the gluconeogenesis. Catalyzes stereospecifically the conversion of dihydroxyacetone phosphate (DHAP) to D-glyceraldehyde-3-phosphate (G3P). This is Triosephosphate isomerase from Corynebacterium diphtheriae (strain ATCC 700971 / NCTC 13129 / Biotype gravis).